The following is a 156-amino-acid chain: Small ribosomal subunit protein uS7c (156 aa).

It belongs to the universal ribosomal protein uS7 family. As to quaternary structure, part of the 30S ribosomal subunit.

Its subcellular location is the plastid. It is found in the chloroplast. Its function is as follows. One of the primary rRNA binding proteins, it binds directly to 16S rRNA where it nucleates assembly of the head domain of the 30S subunit. The protein is Small ribosomal subunit protein uS7c (rps7) of Pyropia yezoensis (Susabi-nori).